A 262-amino-acid chain; its full sequence is Probable ketoamine kinase TTHA1179 (262 aa).

Residue 79-81 (AYL) participates in ATP binding. Aspartate 172 (proton acceptor) is an active-site residue.

This sequence belongs to the fructosamine kinase family.

It carries out the reaction N(6)-(D-ribulosyl)-L-lysine + ATP = N(6)-(3-O-phospho-D-ribulosyl)-L-lysine + ADP + H(+). It catalyses the reaction N(6)-(D-erythrulosyl)-L-lysine + ATP = N(6)-(3-O-phospho-D-erythrulosyl)-L-lysine + ADP + H(+). The enzyme catalyses N(6)-D-ribulosyl-L-lysyl-[protein] + ATP = N(6)-(3-O-phospho-D-ribulosyl)-L-lysyl-[protein] + ADP + H(+). The catalysed reaction is N(6)-(D-erythrulosyl)-L-lysyl-[protein] + ATP = N(6)-(3-O-phospho-D-erythrulosyl)-L-lysyl-[protein] + ADP + H(+). Ketoamine kinase that phosphorylates ketoamines, such as erythruloselysine and ribuloselysine, on the third carbon of the sugar moiety to generate ketoamine 3-phosphate. Has higher activity on free lysine (erythruloselysine and ribuloselysine), than on ribuloselysine and erythruloselysine residues on glycated proteins. In Thermus thermophilus (strain ATCC 27634 / DSM 579 / HB8), this protein is Probable ketoamine kinase TTHA1179.